A 142-amino-acid polypeptide reads, in one-letter code: MFQGASSLSLDAKGRLSVPTRHRDVLSATAGGQLTITKHPHGCLMVFPRPEWEKFRERIAALPMSAQWWKRVFLGNAMDVEMDGTGRILVSPELRAATGIVRDTLLLGMGNHFELWDKATYEAKEAEATQGEMPDVFQDFAF.

SpoVT-AbrB domains are found at residues 5–51 (ASSL…PRPE) and 77–120 (AMDV…DKAT).

Belongs to the MraZ family. As to quaternary structure, forms oligomers.

The protein resides in the cytoplasm. It localises to the nucleoid. The protein is Transcriptional regulator MraZ of Variovorax paradoxus (strain S110).